The following is a 195-amino-acid chain: MNGFVNWYTASVKRSPRLTNGIMTGSLFGIGDVIAQVGFPEKKGQKYDLARTVRAVVYGSLIFSIIGDSWYKFLNQKVIVKPGKHWTNTAARVGCDQLLFAPVGIPMYYGVMSILEGKSLVDAKKKIEDNWWPTLVTNWYVWPAFQLINFSLVPVHHRLFSVNIISIFWNAFLSFKNSISPSDKKVPVNFPPVPE.

Transmembrane regions (helical) follow at residues 21–39 (GIMT…QVGF), 55–71 (AVVY…DSWY), 98–115 (LLFA…MSIL), and 159–175 (LFSV…FLSF).

The protein belongs to the peroxisomal membrane protein PXMP2/4 family.

The protein resides in the mitochondrion inner membrane. In terms of biological role, may be involved in cellular response to stress. Required to maintain mitochondrial DNA (mtDNA) integrity and stability. The sequence is that of Protein SYM1 (SYM1) from Kluyveromyces lactis (strain ATCC 8585 / CBS 2359 / DSM 70799 / NBRC 1267 / NRRL Y-1140 / WM37) (Yeast).